A 374-amino-acid chain; its full sequence is Alcohol dehydrogenase S chain (374 aa).

Ser-2 bears the N-acetylserine mark. Zn(2+)-binding residues include Cys-47, His-68, Cys-98, Cys-101, Cys-104, Cys-112, and Cys-174. NAD(+)-binding positions include 199–204 (GLGGVG), Asp-223, Lys-228, 292–294 (VGV), and Arg-369.

It belongs to the zinc-containing alcohol dehydrogenase family. Class-I subfamily. In terms of assembly, dimer of identical or non-identical chains of two types (E and S) coded by 2 separate genes at different loci. It depends on Zn(2+) as a cofactor.

It localises to the cytoplasm. The catalysed reaction is a primary alcohol + NAD(+) = an aldehyde + NADH + H(+). It carries out the reaction a secondary alcohol + NAD(+) = a ketone + NADH + H(+). This chain is Alcohol dehydrogenase S chain, found in Equus caballus (Horse).